A 272-amino-acid polypeptide reads, in one-letter code: Tryptophan synthase alpha chain (272 aa).

Residues E53 and D64 each act as proton acceptor in the active site.

The protein belongs to the TrpA family. Tetramer of two alpha and two beta chains.

It catalyses the reaction (1S,2R)-1-C-(indol-3-yl)glycerol 3-phosphate + L-serine = D-glyceraldehyde 3-phosphate + L-tryptophan + H2O. Its pathway is amino-acid biosynthesis; L-tryptophan biosynthesis; L-tryptophan from chorismate: step 5/5. The alpha subunit is responsible for the aldol cleavage of indoleglycerol phosphate to indole and glyceraldehyde 3-phosphate. This is Tryptophan synthase alpha chain from Xanthomonas campestris pv. campestris (strain B100).